A 325-amino-acid chain; its full sequence is Basic membrane protein A (325 aa).

An N-terminal signal peptide occupies residues 1–3 (FLS). Cys-4 carries N-palmitoyl cysteine lipidation. Cys-4 carries the S-diacylglycerol cysteine lipid modification.

The protein belongs to the BMP lipoprotein family. In terms of assembly, monomer.

The protein resides in the cell inner membrane. In terms of biological role, immunogenic protein. May be part of an ABC-type nucleoside uptake system involved in the purine salvage pathway. This chain is Basic membrane protein A (bmpA), found in Borreliella afzelii (Borrelia afzelii).